A 257-amino-acid polypeptide reads, in one-letter code: MELTTKLVGTCSALDRLYQSGSAKCLFPRNSRAGLEAVLLNTAGGVTGGDRLSFSAQVRAGTRLSVTTQACERAYRAQPGETGQVRNHLSVATGARMNWLPQETILYDGSSLDRRLSVEIEPGASLLMVEPLVFGRIEMGESLNDARFCDRIEITRRGRPIFLDATRLQGGIAAHLAKPFIANGAGAMALLVYLAENAEAVLPRLRQMLPECAGASLIGEDLLVMRVLAADSFLLRQSLLPALRLLNNNEIPRCWTI.

It belongs to the UreD family. As to quaternary structure, ureD, UreF and UreG form a complex that acts as a GTP-hydrolysis-dependent molecular chaperone, activating the urease apoprotein by helping to assemble the nickel containing metallocenter of UreC. The UreE protein probably delivers the nickel.

It is found in the cytoplasm. Required for maturation of urease via the functional incorporation of the urease nickel metallocenter. The protein is Urease accessory protein UreD of Ruegeria pomeroyi (strain ATCC 700808 / DSM 15171 / DSS-3) (Silicibacter pomeroyi).